A 713-amino-acid chain; its full sequence is Peroxisomal biogenesis factor 8 (713 aa).

Positions 1–31 (MYRLGSQGRSIQSQLQNGDSSSGRPLQLQGT) are disordered. A compositionally biased stretch (polar residues) spans 7 to 30 (QGRSIQSQLQNGDSSSGRPLQLQG). A Microbody targeting signal motif is present at residues 711–713 (AKL).

In terms of assembly, interacts with PEX5 (via N-terminus).

It localises to the peroxisome membrane. In terms of biological role, essential component of the machinery required for the import of both PTS1 and PTS2 (and perhaps all) peroxisomal matrix proteins. Binding of PEX8 to the N-terminus of PEX5 cargo receptor induces a conformational change of the TPR domains and decrease their binding affinity to cargo, facilitating the release of the PTS1 proteins within the peroxisome. The chain is Peroxisomal biogenesis factor 8 from Komagataella phaffii (strain GS115 / ATCC 20864) (Yeast).